The primary structure comprises 539 residues: Glucose-6-phosphate isomerase (539 aa).

The active-site Proton donor is E349. Residues H380 and K508 contribute to the active site.

It belongs to the GPI family.

It is found in the cytoplasm. The enzyme catalyses alpha-D-glucose 6-phosphate = beta-D-fructose 6-phosphate. It functions in the pathway carbohydrate biosynthesis; gluconeogenesis. Its pathway is carbohydrate degradation; glycolysis; D-glyceraldehyde 3-phosphate and glycerone phosphate from D-glucose: step 2/4. Catalyzes the reversible isomerization of glucose-6-phosphate to fructose-6-phosphate. This is Glucose-6-phosphate isomerase from Caulobacter sp. (strain K31).